Consider the following 116-residue polypeptide: Large ribosomal subunit protein bL17 (116 aa).

The protein belongs to the bacterial ribosomal protein bL17 family. Part of the 50S ribosomal subunit. Contacts protein L32.

In Synechocystis sp. (strain ATCC 27184 / PCC 6803 / Kazusa), this protein is Large ribosomal subunit protein bL17.